A 330-amino-acid chain; its full sequence is Phenylalanine--tRNA ligase alpha subunit (330 aa).

Mg(2+) is bound at residue glutamate 255.

Belongs to the class-II aminoacyl-tRNA synthetase family. Phe-tRNA synthetase alpha subunit type 1 subfamily. As to quaternary structure, tetramer of two alpha and two beta subunits. Requires Mg(2+) as cofactor.

Its subcellular location is the cytoplasm. The catalysed reaction is tRNA(Phe) + L-phenylalanine + ATP = L-phenylalanyl-tRNA(Phe) + AMP + diphosphate + H(+). The chain is Phenylalanine--tRNA ligase alpha subunit from Acinetobacter baumannii (strain AYE).